A 299-amino-acid chain; its full sequence is Class II hydrophobin C (299 aa).

Residues 1–17 (MKFLTVAAAIFASTSLA) form the signal peptide. N-linked (GlcNAc...) asparagine glycans are attached at residues N39, N78, and N91. Cystine bridges form between C232-C281, C242-C272, C243-C255, and C282-C293.

Belongs to the cerato-ulmin hydrophobin family.

Its subcellular location is the secreted. The protein resides in the cell wall. It is found in the vacuole. The protein localises to the cytoplasmic vesicle. Aerial growth, conidiation, and dispersal of filamentous fungi in the environment rely upon a capability of their secreting small amphipathic proteins called hydrophobins (HPBs) with low sequence identity. Class I can self-assemble into an outermost layer of rodlet bundles on aerial cell surfaces, conferring cellular hydrophobicity that supports fungal growth, development and dispersal; whereas Class II form highly ordered films at water-air interfaces through intermolecular interactions but contribute nothing to the rodlet structure. Hyd2C contributes to certain cell wall-related features, such as hydrophobicity but is not involved in cell wall-related events during fungal proliferation in host hemocoel. Does not contribute to conidial hydrophobicity. Involved actively in the asexual development. This chain is Class II hydrophobin C, found in Beauveria bassiana (strain ARSEF 2860) (White muscardine disease fungus).